A 301-amino-acid polypeptide reads, in one-letter code: Glycine--tRNA ligase alpha subunit (301 aa).

This sequence belongs to the class-II aminoacyl-tRNA synthetase family. In terms of assembly, tetramer of two alpha and two beta subunits.

Its subcellular location is the cytoplasm. It catalyses the reaction tRNA(Gly) + glycine + ATP = glycyl-tRNA(Gly) + AMP + diphosphate. The sequence is that of Glycine--tRNA ligase alpha subunit from Campylobacter hominis (strain ATCC BAA-381 / DSM 21671 / CCUG 45161 / LMG 19568 / NCTC 13146 / CH001A).